The chain runs to 1604 residues: Ubiquitin carboxyl-terminal hydrolase 32 (1604 aa).

EF-hand domains follow at residues 91-126 (KDEE…VDGK), 228-263 (IRPS…CCRG), and 264-299 (PLAE…LLEV). Residues Asp-241, Asn-243, Asp-245, His-247, Glu-252, Asp-277, Asp-279, Asp-281, and Glu-288 each contribute to the Ca(2+) site. Residues 369–585 (ATPEEEGQII…ANLALPRPVI (217 aa)) enclose the DUSP domain. Residues 734-1567 (TGLSNLGNTC…SAYILFYEQQ (834 aa)) enclose the USP domain. Residue Cys-743 is the Nucleophile of the active site. Tyr-1173 is modified (phosphotyrosine). Disordered regions lie at residues 1343 to 1362 (KKVD…SKSP) and 1367 to 1431 (ANII…DASK). 4 positions are modified to phosphoserine: Ser-1350, Ser-1372, Ser-1376, and Ser-1454. The span at 1367 to 1399 (ANIISSPKGSPSSSRKSGTSCPSSKNSSPNSSP) shows a compositional bias: low complexity. His-1526 (proton acceptor) is an active-site residue. Residue Ser-1588 is modified to Phosphoserine. At Cys-1601 the chain carries Cysteine methyl ester. The S-farnesyl cysteine moiety is linked to residue Cys-1601. Positions 1602-1604 (VLQ) are cleaved as a propeptide — removed in mature form.

Belongs to the peptidase C19 family.

It is found in the golgi apparatus membrane. It carries out the reaction Thiol-dependent hydrolysis of ester, thioester, amide, peptide and isopeptide bonds formed by the C-terminal Gly of ubiquitin (a 76-residue protein attached to proteins as an intracellular targeting signal).. Deubiquitinase that can remove conjugated ubiquitin from target proteins, such as RAB7A and LAMTOR1. Acts as a positive regulator of the mTORC1 signaling by mediating deubiquitination of LAMTOR1, thereby promoting the association between LAMTOR1 and the lysosomal V-ATPase complex and subsequent activation of the mTORC1 complex. The polypeptide is Ubiquitin carboxyl-terminal hydrolase 32 (USP32) (Homo sapiens (Human)).